We begin with the raw amino-acid sequence, 653 residues long: MHCLGAEYLVSAEGAPRQREWRPQIYRKCTDTAWLFLFFLFWTGLVFIMGYSVVAGAAGRLLFGYDSFGNMCGKKNSPVEGAPLSGQDMTLKKHVFFMNSCNLEVKGTQLNRMALCVSNCPEEQLDSLEEVQFFANTSGSFLCVYSLNSFNYTHSPKADSLCPRLPVPPSKSFPLFNRCVPQTPECYSLFASVLINDVDTLHRILSGIMSGRDTILGLCILALALSLAMMFTFRFITTLLVHIFISLVILGLLFVCGVLWWLYYDYTNDLSIELDTERENMKCVLGFAIVSTGITAVLLVLIFVLRKRIKLTVELFQITNKAISSAPFLLFQPLWTFAILIFFWVLWVAVLLSLGTAGAAQVMEGGQVEYKPLSGIRYMWSYHLIGLIWTSEFILACQQMTIAGAVVTCYFNRSKNDPPDHPILSSLSILFFYHQGTVVKGSFLISVVRIPRIIVMYMQNALKEQQHGALSRYLFRCCYCCFWCLDKYLLHLNQNAYTTTAINGTDFCTSAKDAFKILSKNSSHFTSINCFGDFIIFLGKVLVVCFTVFGGLMAFNYNRAFQVWAVPLLLVAFFAYLVAHSFLSVFETVLDALFLCFAVDLETNDGSSEKPYFMDQEFLSFVKRSNKLNNARAQQDKHSLRNEEGTELQAIVR.

The helical transmembrane segment at Trp34–Val54 threads the bilayer. Residues Asn136 and Asn151 are each glycosylated (N-linked (GlcNAc...) asparagine). A run of 5 helical transmembrane segments spans residues Asp213 to Phe233, Ile243 to Tyr263, Val284 to Val304, Leu334 to Leu354, and Leu384 to Gly404. N-linked (GlcNAc...) asparagine glycosylation is found at Asn412, Asn503, and Asn521. Helical transmembrane passes span Phe534–Ala554 and Val563–Leu583. A disordered region spans residues Arg632 to Arg653. Basic and acidic residues predominate over residues Gln634 to Glu644.

This sequence belongs to the CTL (choline transporter-like) family.

Its subcellular location is the membrane. The sequence is that of Choline transporter-like protein 3 (SLC44A3) from Homo sapiens (Human).